A 227-amino-acid polypeptide reads, in one-letter code: Probable septum site-determining protein MinC (227 aa).

It belongs to the MinC family. As to quaternary structure, interacts with MinD and FtsZ.

In terms of biological role, cell division inhibitor that blocks the formation of polar Z ring septums. Rapidly oscillates between the poles of the cell to destabilize FtsZ filaments that have formed before they mature into polar Z rings. Prevents FtsZ polymerization. This Geobacillus thermodenitrificans (strain NG80-2) protein is Probable septum site-determining protein MinC.